A 185-amino-acid chain; its full sequence is Crossover junction endodeoxyribonuclease RuvC (185 aa).

Active-site residues include Asp-7, Glu-68, and Asp-141. Positions 7, 68, and 141 each coordinate Mg(2+).

It belongs to the RuvC family. Homodimer which binds Holliday junction (HJ) DNA. The HJ becomes 2-fold symmetrical on binding to RuvC with unstacked arms; it has a different conformation from HJ DNA in complex with RuvA. In the full resolvosome a probable DNA-RuvA(4)-RuvB(12)-RuvC(2) complex forms which resolves the HJ. Requires Mg(2+) as cofactor.

The protein resides in the cytoplasm. It catalyses the reaction Endonucleolytic cleavage at a junction such as a reciprocal single-stranded crossover between two homologous DNA duplexes (Holliday junction).. Its function is as follows. The RuvA-RuvB-RuvC complex processes Holliday junction (HJ) DNA during genetic recombination and DNA repair. Endonuclease that resolves HJ intermediates. Cleaves cruciform DNA by making single-stranded nicks across the HJ at symmetrical positions within the homologous arms, yielding a 5'-phosphate and a 3'-hydroxyl group; requires a central core of homology in the junction. The consensus cleavage sequence is 5'-(A/T)TT(C/G)-3'. Cleavage occurs on the 3'-side of the TT dinucleotide at the point of strand exchange. HJ branch migration catalyzed by RuvA-RuvB allows RuvC to scan DNA until it finds its consensus sequence, where it cleaves and resolves the cruciform DNA. This is Crossover junction endodeoxyribonuclease RuvC from Helicobacter hepaticus (strain ATCC 51449 / 3B1).